The chain runs to 669 residues: Protein ENTREP3 (669 aa).

A run of 3 helical transmembrane segments spans residues 34-54, 67-87, and 91-111; these read LLTL…FSMV, SCPS…IVSW, and FTLV…LSMA. Asparagine 160 carries an N-linked (GlcNAc...) asparagine glycan. The helical transmembrane segment at 174-194 threads the bilayer; the sequence is LFSVCGLTICAAIICTLSAIV. Phosphoserine is present on residues serine 359 and serine 390. Disordered regions lie at residues 387–420, 445–502, and 550–571; these read FEDS…PTAA, PRGG…TTSS, and RSAE…SGPT. Residues 399 to 408 show a composition bias toward low complexity; the sequence is AARSYSCSAP. A Phosphoserine modification is found at serine 494. Serine 575 is modified (phosphoserine). Residues 597–624 are disordered; sequence RRSPDPTGTGAHGYKQVRRSPWGRPGRE.

This sequence belongs to the ENTREP family. In terms of assembly, may interact with WWOX.

It is found in the membrane. The chain is Protein ENTREP3 from Mus musculus (Mouse).